The chain runs to 172 residues: Large ribosomal subunit protein eL20A (172 aa).

Phosphoserine is present on Ser32. Residues Lys125, Lys131, and Lys149 each participate in a glycyl lysine isopeptide (Lys-Gly) (interchain with G-Cter in ubiquitin) cross-link.

Belongs to the eukaryotic ribosomal protein eL20 family. Component of the large ribosomal subunit (LSU). Mature yeast ribosomes consist of a small (40S) and a large (60S) subunit. The 40S small subunit contains 1 molecule of ribosomal RNA (18S rRNA) and 33 different proteins (encoded by 57 genes). The large 60S subunit contains 3 rRNA molecules (25S, 5.8S and 5S rRNA) and 46 different proteins (encoded by 81 genes). eL20 forms multiple interactions with RNA and proteins in the central protuberance, connecting components of core functional centers that are located far apart.

It is found in the cytoplasm. In terms of biological role, component of the ribosome, a large ribonucleoprotein complex responsible for the synthesis of proteins in the cell. The small ribosomal subunit (SSU) binds messenger RNAs (mRNAs) and translates the encoded message by selecting cognate aminoacyl-transfer RNA (tRNA) molecules. The large subunit (LSU) contains the ribosomal catalytic site termed the peptidyl transferase center (PTC), which catalyzes the formation of peptide bonds, thereby polymerizing the amino acids delivered by tRNAs into a polypeptide chain. The nascent polypeptides leave the ribosome through a tunnel in the LSU and interact with protein factors that function in enzymatic processing, targeting, and the membrane insertion of nascent chains at the exit of the ribosomal tunnel. This chain is Large ribosomal subunit protein eL20A, found in Saccharomyces cerevisiae (strain ATCC 204508 / S288c) (Baker's yeast).